Here is a 550-residue protein sequence, read N- to C-terminus: Glucose-6-phosphate isomerase (550 aa).

Glu356 acts as the Proton donor in catalysis. Catalysis depends on residues His387 and Lys515.

It belongs to the GPI family.

It is found in the cytoplasm. The enzyme catalyses alpha-D-glucose 6-phosphate = beta-D-fructose 6-phosphate. It participates in carbohydrate biosynthesis; gluconeogenesis. The protein operates within carbohydrate degradation; glycolysis; D-glyceraldehyde 3-phosphate and glycerone phosphate from D-glucose: step 2/4. In terms of biological role, catalyzes the reversible isomerization of glucose-6-phosphate to fructose-6-phosphate. In Vibrio cholerae serotype O1 (strain ATCC 39315 / El Tor Inaba N16961), this protein is Glucose-6-phosphate isomerase.